The following is a 462-amino-acid chain: Cysteine--tRNA ligase (462 aa).

A Zn(2+)-binding site is contributed by cysteine 24. The 'HIGH' region motif lies at 26–36 (PTVYDDAHLGH). Zn(2+)-binding residues include cysteine 199, histidine 224, and glutamate 228. Residues 256 to 260 (KMSKS) carry the 'KMSKS' region motif. Residue lysine 259 participates in ATP binding.

This sequence belongs to the class-I aminoacyl-tRNA synthetase family. Monomer. Zn(2+) serves as cofactor.

It localises to the cytoplasm. It catalyses the reaction tRNA(Cys) + L-cysteine + ATP = L-cysteinyl-tRNA(Cys) + AMP + diphosphate. The protein is Cysteine--tRNA ligase of Campylobacter jejuni subsp. doylei (strain ATCC BAA-1458 / RM4099 / 269.97).